An 84-amino-acid chain; its full sequence is Small ribosomal subunit protein bS18 (84 aa).

It belongs to the bacterial ribosomal protein bS18 family. Part of the 30S ribosomal subunit. Forms a tight heterodimer with protein bS6.

Functionally, binds as a heterodimer with protein bS6 to the central domain of the 16S rRNA, where it helps stabilize the platform of the 30S subunit. The chain is Small ribosomal subunit protein bS18 from Mycoplasma mobile (strain ATCC 43663 / 163K / NCTC 11711) (Mesomycoplasma mobile).